The primary structure comprises 363 residues: G-protein coupled receptor 4 (363 aa).

Residues 1–8 (MGNGTWEG) are Extracellular-facing. Asparagine 3 carries an N-linked (GlcNAc...) asparagine glycan. Residues 9 to 45 (CHVDSRVDHLFPPSLYIFVIGVGLPTNCLALWAAYRQ) form a helical membrane-spanning segment. Cystine bridges form between cysteine 9–cysteine 258 and cysteine 90–cysteine 168. The Cytoplasmic segment spans residues 46–49 (VRQR). Residues 50 to 80 (NELGVYLMNLSIADLLYICTLPLWVDYFLHH) form a helical membrane-spanning segment. Residues 81-85 (DNWIH) lie on the Extracellular side of the membrane. Residues 86 to 121 (GPGSCKLFGFIFYTNIYISIAFLCCISVDRYLAVAH) form a helical membrane-spanning segment. Over 122–129 (PLRFARLR) the chain is Cytoplasmic. Residues 130–156 (RVKTAVAVSSVVWATELGANSVPLFHD) form a helical membrane-spanning segment. The Extracellular portion of the chain corresponds to 157–172 (ELFRDRYNHTFCFEKF). The segment at 157-172 (ELFRDRYNHTFCFEKF) is extracellular loop 2 (ECL2). Asparagine 164 carries an N-linked (GlcNAc...) asparagine glycan. Residues 173 to 210 (PMEGWVAWMNLYRVFVGFLFPWALMLLSYRGILRAVRG) traverse the membrane as a helical segment. The Cytoplasmic segment spans residues 211–214 (SVST). The helical transmembrane segment at 215–250 (ERQEKAKIKRLALSLIAIVLVCFAPYHVLLLSRSAV) threads the bilayer. Residues 251-260 (YLGHPWDCGF) are Extracellular-facing. Residues 261–289 (EERVFSAYHSSLAFTSLNCVADPILYCLV) form a helical membrane-spanning segment. The Cytoplasmic portion of the chain corresponds to 290-363 (NEGARSDVAK…QLKMLPPPAP (74 aa)). The tract at residues 344–363 (ASPPSQGDQVQLKMLPPPAP) is disordered.

Belongs to the G-protein coupled receptor 1 family.

The protein resides in the cell membrane. Its activity is regulated as follows. Activated by a network of residues that connects an extracellular-facing cavity to Glu-145, a conserved charged residue buried in the transmembrane core of the receptor. Protonation likely drives conformational changes in extracellular loop 2 (ECL2), which stabilizes movement of transmembrane 3 (TM3) and a series of rearrangements that connect the extracellular-facing cavity to Glu-145, a residue only conserved in proton-sensing G-protein coupled receptors. Its function is as follows. Proton-sensing G-protein coupled receptor activated by extracellular pH, which is required to monitor pH changes and generate adaptive reactions. Activated by an optimal pH of 6.8-7.2. Ligand binding causes a conformation change that triggers signaling via guanine nucleotide-binding proteins (G proteins) and modulates the activity of downstream effectors, such as adenylate cyclase. GPR4 is mainly coupled to G(s) G proteins and mediates activation of adenylate cyclase activity. May also couple with G(q) and G(12)/G(13) G proteins. Acts as a key regulator of respiratory sensitivity to CO2/H(+) in brain retrotrapezoid nucleus neurons: acts by mediating detection of protons generated by the formation of carbonic acid in the blood, an important mechanism to impulse to breathe. Also acts as a regulator of acid secretion in the kidney collecting duct by maintaining acid-base homeostasis in the kidney. Acidosis-induced GPR4 activation increases paracellular gap formation and permeability of vascular endothelial cells, possibly through the G(12)/G(13)/Rho GTPase signaling pathway. The chain is G-protein coupled receptor 4 (GPR4) from Sus scrofa (Pig).